The following is a 409-amino-acid chain: NADH-quinone oxidoreductase subunit 4 (409 aa).

This sequence belongs to the complex I 49 kDa subunit family. In terms of assembly, NDH-1 is composed of 15 different subunits, Nqo1 to Nqo15. The complex has a L-shaped structure, with the hydrophobic arm (subunits Nqo7, Nqo8 and Nqo10 to Nqo14) embedded in the membrane and the hydrophilic peripheral arm (subunits Nqo1 to Nqo6, Nqo9 and Nqo15) protruding into the bacterial cytoplasm. The hydrophilic domain contains all the redox centers. This subunit interacts extensively with Nqo6.

The protein localises to the cell membrane. It catalyses the reaction a quinone + NADH + 5 H(+)(in) = a quinol + NAD(+) + 4 H(+)(out). Functionally, NDH-1 shuttles electrons from NADH, via FMN and iron-sulfur (Fe-S) centers, to quinones in the respiratory chain. The immediate electron acceptor for the enzyme in this species is menaquinone. Couples the redox reaction to proton translocation (for every two electrons transferred, four hydrogen ions are translocated across the cytoplasmic membrane), and thus conserves the redox energy in a proton gradient required for the synthesis of ATP. The Nqo4 subunit may contain the quinone-binding site. The sequence is that of NADH-quinone oxidoreductase subunit 4 (nqo4) from Thermus thermophilus (strain ATCC 27634 / DSM 579 / HB8).